Reading from the N-terminus, the 105-residue chain is Large ribosomal subunit protein bL21 (105 aa).

Belongs to the bacterial ribosomal protein bL21 family. As to quaternary structure, part of the 50S ribosomal subunit. Contacts protein L20.

In terms of biological role, this protein binds to 23S rRNA in the presence of protein L20. This is Large ribosomal subunit protein bL21 from Phocaeicola vulgatus (strain ATCC 8482 / DSM 1447 / JCM 5826 / CCUG 4940 / NBRC 14291 / NCTC 11154) (Bacteroides vulgatus).